The following is a 90-amino-acid chain: Small ribosomal subunit protein bS16 (90 aa).

This sequence belongs to the bacterial ribosomal protein bS16 family.

The polypeptide is Small ribosomal subunit protein bS16 (Listeria monocytogenes serotype 4b (strain F2365)).